A 279-amino-acid chain; its full sequence is uncharacterized protein (279 aa).

A signal peptide spans 1–21 (MKIIRTLFLLLIAVYGSSVVA).

This sequence to E.coli YfcO.

This is an uncharacterized protein from Salmonella typhimurium (strain LT2 / SGSC1412 / ATCC 700720).